The following is a 447-amino-acid chain: GTPase Der (447 aa).

EngA-type G domains lie at 4 to 165 (QIIT…PEEE) and 180 to 357 (LQIV…KIWN). GTP-binding positions include 10–17 (GRPNVGKS), 57–61 (DTPGL), 119–122 (NKCE), 186–193 (GRPNAGKS), 233–237 (DTAGL), and 298–301 (NKWD). The KH-like domain maps to 358-443 (KKITTSKLNE…PIRFIYVKTK (86 aa)).

It belongs to the TRAFAC class TrmE-Era-EngA-EngB-Septin-like GTPase superfamily. EngA (Der) GTPase family. In terms of assembly, associates with the 50S ribosomal subunit.

In terms of biological role, GTPase that plays an essential role in the late steps of ribosome biogenesis. In Rickettsia africae (strain ESF-5), this protein is GTPase Der.